We begin with the raw amino-acid sequence, 170 residues long: Ubiquinone/menaquinone biosynthesis C-methyltransferase UbiE (170 aa).

Over residues 1–12 (MNDQRKGDHAEP) the composition is skewed to basic and acidic residues. The interval 1-22 (MNDQRKGDHAEPTTHFGYQDVP) is disordered.

The protein belongs to the class I-like SAM-binding methyltransferase superfamily. MenG/UbiE family.

The catalysed reaction is a 2-demethylmenaquinol + S-adenosyl-L-methionine = a menaquinol + S-adenosyl-L-homocysteine + H(+). It catalyses the reaction a 2-methoxy-6-(all-trans-polyprenyl)benzene-1,4-diol + S-adenosyl-L-methionine = a 5-methoxy-2-methyl-3-(all-trans-polyprenyl)benzene-1,4-diol + S-adenosyl-L-homocysteine + H(+). It participates in quinol/quinone metabolism; menaquinone biosynthesis; menaquinol from 1,4-dihydroxy-2-naphthoate: step 2/2. Its pathway is cofactor biosynthesis; ubiquinone biosynthesis. Functionally, methyltransferase required for the conversion of demethylmenaquinol (DMKH2) to menaquinol (MKH2) and the conversion of 2-polyprenyl-6-methoxy-1,4-benzoquinol (DDMQH2) to 2-polyprenyl-3-methyl-6-methoxy-1,4-benzoquinol (DMQH2). The polypeptide is Ubiquinone/menaquinone biosynthesis C-methyltransferase UbiE (ubiE) (Ectopseudomonas oleovorans (Pseudomonas oleovorans)).